The following is a 724-amino-acid chain: MRFFVSCAKGLEYLLVDEVLALGAAGATATVAGVNVEGGLCDAQRLVLWSRLASRVLWPLAAFACADEDALYAGVAALPWVEHVLPGQTLAVDAHVSGEAITHARYAAQRVKDAVVDTLRDAGVVRPSVDVEHPDVRLNLSLRKGRATLSVDLGGRALHHRGWRQAPHAASLKEHLAAAVLLRAGWAKVYAEGGGLLDPMCGSGTLLIEGALMVADVAPGLSRYADPDAMSHVSVAERPVLLPSRWRGFDVVAWEALVVDAQQRARRGLAELRPVLHGSDIDPRALGAAFANARAAGVQDAIEFVVAGIDVLPAVSEPHGVVVCNAPYDVRLAADPGLYRHLGDALRRVVPRWRAALVCGSSTLAFATGLRADKKYQFFNGALECVLIVCDPVVPLAREAGGAQALSEGAQMAANRLRKNVQRLKKWRIRAGVECYRVYDADLPEYAAAIDVYQEVDGARRLFLHVQEYAAPASIPEGDVRRRRHELLAAVRAVFDVSVAQVALKTRQRGKGGSQYGCFAQRGEFFHVCEHGALLRVNLFDYLDTGLFLDHRPLRGRMAREAVGKRFLNVFCYTGVASVEAAVAGAAATTSVDLSSTYLHWCTDNFALNGQGGVRHRLVQADALAWLEAERGQYDVIFCDPPTFSNSARADDFDVQRDHVRLLRAAVARLTPGGVLYFSNNFRRFRLDVDAVAAFAQCEEISPVTIDLDFSRNTRIHRTWLLWR.

The 112-residue stretch at 42–153 (DAQRLVLWSR…KGRATLSVDL (112 aa)) folds into the THUMP domain.

This sequence belongs to the methyltransferase superfamily. RlmKL family.

The protein resides in the cytoplasm. It catalyses the reaction guanosine(2445) in 23S rRNA + S-adenosyl-L-methionine = N(2)-methylguanosine(2445) in 23S rRNA + S-adenosyl-L-homocysteine + H(+). The enzyme catalyses guanosine(2069) in 23S rRNA + S-adenosyl-L-methionine = N(2)-methylguanosine(2069) in 23S rRNA + S-adenosyl-L-homocysteine + H(+). Its function is as follows. Specifically methylates the guanine in position 2445 (m2G2445) and the guanine in position 2069 (m7G2069) of 23S rRNA. The protein is Ribosomal RNA large subunit methyltransferase K/L of Xylella fastidiosa (strain M23).